The sequence spans 1204 residues: E3 ubiquitin-protein ligase DZIP3 (1204 aa).

2 disordered regions span residues 1-22 (MDSL…QTKE) and 640-681 (SIPS…EQVS). Positions 649–658 (SVKDLQEVKS) are enriched in basic and acidic residues. A compositionally biased stretch (basic residues) spans 659 to 668 (KTKKKKRTKS). Coiled coils occupy residues 746 to 861 (KETE…TSRA) and 906 to 941 (QLKA…KVKQ). Basic and acidic residues predominate over residues 1088 to 1098 (PKKSESEEKSA). The tract at residues 1088–1141 (PKKSESEEKSAQDGNNASPSHTASQPNAPQDPKSAQGSATWEGDKDMDNEEEEE) is disordered. The span at 1099–1126 (QDGNNASPSHTASQPNAPQDPKSAQGSA) shows a compositional bias: polar residues. The segment covering 1132 to 1141 (KDMDNEEEEE) has biased composition (acidic residues). The RING-type; atypical zinc-finger motif lies at 1144–1184 (CVICHENLSPENLSVLPCAHKFHSQCIRPWLMQQGTCPTCR).

In terms of assembly, probably interacts with DAZL.

The protein localises to the cytoplasm. It carries out the reaction S-ubiquitinyl-[E2 ubiquitin-conjugating enzyme]-L-cysteine + [acceptor protein]-L-lysine = [E2 ubiquitin-conjugating enzyme]-L-cysteine + N(6)-ubiquitinyl-[acceptor protein]-L-lysine.. Its pathway is protein modification; protein ubiquitination. Functionally, E3 Ubiquitin ligase proteins mediate ubiquitination and subsequent proteasomal degradation of target proteins. E3 ubiquitin ligases accept ubiquitin from an E2 ubiquitin-conjugating enzyme in the form of a thioester and then directly transfers the ubiquitin to targeted substrates. Able to specifically bind RNA. The polypeptide is E3 ubiquitin-protein ligase DZIP3 (Dzip3) (Mus musculus (Mouse)).